A 1522-amino-acid chain; its full sequence is Sodium channel protein 1 brain (1522 aa).

Residues 1–50 (MDEKYTAKNRDKTFVVIEKRFKKNIIHRFSAKRSLFLFTPRNPIRRLAVC) lie on the Cytoplasmic side of the membrane. The I repeat unit spans residues 41 to 342 (RNPIRRLAVC…VATAYELEVK (302 aa)). A helical membrane pass occupies residues 51-70 (IATNVCFDYFLMFTIMINCV). Topologically, residues 71 to 77 (FLAMPDI) are extracellular. The chain crosses the membrane as a helical span at residues 78 to 99 (SEFAEYIFLGIYTMEMAIKLVA). The Cytoplasmic segment spans residues 100–112 (GGFFIDKYTYLRD). Residues 113 to 134 (AWNCLDFTVIMISYITLLLQTI) traverse the membrane as a helical segment. The Extracellular portion of the chain corresponds to 135-143 (NDKVISDIT). Residues 144–167 (GLRTFRVLRALRTLSIIPGLKTMV) traverse the membrane as a helical; Voltage-sensor segment. Over 168 to 179 (NALLRALRMLIS) the chain is Cytoplasmic. A helical transmembrane segment spans residues 180-201 (VLILILFCLWIFSQAGVQLFGG). Residues 202–278 (ALRHKCVLQI…PNYGYTNFDS (77 aa)) lie on the Extracellular side of the membrane. Cys-207 and Cys-255 are oxidised to a cystine. N-linked (GlcNAc...) asparagine glycosylation is found at Asn-248 and Asn-258. The segment at residues 279–303 (IGWSMLISFQLLTQDYWEDVYNKVI) is an intramembrane region (pore-forming). At 304–308 (RAHSP) the chain is on the extracellular side. A helical transmembrane segment spans residues 309–331 (WTVIYFIVINFFGSLYLMNLMLA). The Cytoplasmic segment spans residues 332 to 406 (VVATAYELEV…WLRVQSFAHC (75 aa)). The stretch at 393 to 647 (CYNPWLRVQS…EQEVEVSSFA (255 aa)) is one II repeat. Residues 407-426 (IITDSFTEVFIIFIIVLNTV) form a helical membrane-spanning segment. Topologically, residues 427 to 442 (FLAMEHHGMSMELKNV) are extracellular. Residues 443 to 464 (LKVANYVFTTVFVLEAILKLLA) traverse the membrane as a helical segment. The Cytoplasmic segment spans residues 465-472 (FNKQYFKS). Residues 473 to 491 (GWNICDLVVVVASLIDLGV) form a helical membrane-spanning segment. At 492-498 (EGLKGVS) the chain is on the extracellular side. A helical; Voltage-sensor membrane pass occupies residues 499–522 (VFRSFRLLRVFHLAQSWTTMRLLL). At 523–531 (CIILNTLGS) the chain is on the cytoplasmic side. Residues 532–553 (LGYLTIILIIVIYIFAVTGLQL) form a helical membrane-spanning segment. Topologically, residues 554 to 575 (FHTEYTPDKFRGEPVPRWNFND) are extracellular. The pore-forming intramembrane region spans 576-596 (FLHSFMMVFRILCGEWIEPMY). Over 597–607 (DCMRACNGLCF) the chain is Extracellular. A disulfide bridge connects residues Cys-598 and Cys-606. Residues 608–628 (LIFIPVTVFGKTLFFLFIGLV) form a helical membrane-spanning segment. Residues 629–777 (LGAFGSDTVE…WNNFRRQLMM (149 aa)) are Cytoplasmic-facing. Residues 770 to 1074 (NFRRQLMMVC…QNYYNTLKKL (305 aa)) form an III repeat. The helical transmembrane segment at 778–797 (VCENKYFETGVLVIIFASSI) threads the bilayer. The Extracellular segment spans residues 798–815 (LLAFEDIYLNEKPRLKLA). The chain crosses the membrane as a helical span at residues 816–837 (IFYLDITFCLLFFLEMVLKLVA). Residues 838 to 846 (LGFVHYYTH) are Cytoplasmic-facing. Residues 847 to 868 (FWTILDFTIVIITVISLAASGL) traverse the membrane as a helical segment. Over 869 to 874 (GMEQIT) the chain is Extracellular. A helical; Voltage-sensor membrane pass occupies residues 875 to 898 (AFRSLRTLRALRPLRAVSRWQGMK). Over 899-915 (IIVNALMLSIPSIFNVL) the chain is Cytoplasmic. The helical transmembrane segment at 916 to 937 (LVCVVFWLIFAIMGVQLFAGKF) threads the bilayer. The Extracellular segment spans residues 938 to 976 (YKCVNETNMRIPPTEVANKIECYNKNYTWVNSNVNFDNV). Asn-942 and Asn-963 each carry an N-linked (GlcNAc...) asparagine glycan. Positions 977–998 (GGAFLALFQVATFEGWMEIMAD) form an intramembrane region, pore-forming. Residues 999-1009 (AVDVTEVDEQP) are Extracellular-facing. The chain crosses the membrane as a helical span at residues 1010–1022 (KFEATVYYYFYFV). Residues 1023–1100 (LFIIFGSFFV…QAVVYDLVMS (78 aa)) lie on the Cytoplasmic side of the membrane. A Phosphothreonine; by PKC modification is found at Thr-1076. An IV repeat occupies 1083-1386 (VKRPKNKCQA…WEQYDPLATQ (304 aa)). Residues 1101-1120 (NQFEIFITTIIITNMIFMAF) form a helical membrane-spanning segment. The Extracellular portion of the chain corresponds to 1121-1132 (EHYNQSEVVTEV). A glycan (N-linked (GlcNAc...) asparagine) is linked at Asn-1124. The chain crosses the membrane as a helical span at residues 1133-1154 (LATANIAFTILYAVEAIIKIIG). Residues 1155–1162 (LRIHYLRN) are Cytoplasmic-facing. A helical transmembrane segment spans residues 1163-1184 (LWNVFDFLVVTLSVMDAFLNDI). Topologically, residues 1185 to 1194 (FGDGIFMNPS) are extracellular. The chain crosses the membrane as a helical; Voltage-sensor span at residues 1195–1218 (LLRVARMFRIGRIIRLIKWAKGMR). Over 1219-1236 (KLLFALVISLPALFNIGA) the chain is Cytoplasmic. Residues 1237-1258 (LLMLVMFIYTIIGMSSFGQIKL) form a helical membrane-spanning segment. The Extracellular portion of the chain corresponds to 1259–1270 (SGALNDQVNFQT). An intramembrane region (pore-forming) is located at residues 1271 to 1293 (FGKTFLLLVRLATSAGWNDILGP). The Extracellular portion of the chain corresponds to 1294 to 1323 (LLIQPPNCDPNYITTSTGEKIKVVNGDCGM). A helical transmembrane segment spans residues 1324–1346 (PWLAISYMVSYIIIVFMIVFNMY). Residues 1347–1522 (IAVILENFNQ…FIISAPETAV (176 aa)) are Cytoplasmic-facing.

This sequence belongs to the sodium channel (TC 1.A.1.10) family.

Its subcellular location is the cell membrane. Functionally, mediates the voltage-dependent sodium ion permeability of excitable membranes. Assuming opened or closed conformations in response to the voltage difference across the membrane, the protein forms a sodium-selective channel through which Na(+) ions may pass in accordance with their electrochemical gradient. This chain is Sodium channel protein 1 brain, found in Heterololigo bleekeri (Spear squid).